The chain runs to 199 residues: Transmembrane protein 223 (199 aa).

The Mitochondrial matrix portion of the chain corresponds to 1-43 (MVASVPLRNVSHLLSVLRSQNVPRYLQNGVPRDVLLFRHERGR). A helical transmembrane segment spans residues 44–64 (FFAILGLFCAGQGIFWTSLAV). Topologically, residues 65 to 94 (AALSRPLSRVPAEAPNRSYQDLRSALWRYG) are mitochondrial intermembrane. A helical transmembrane segment spans residues 95 to 115 (LAVGCGTMGVLVLGAGLLYSL). Residues 116–199 (RSVRSVMLLA…DNTVGAYRSL (84 aa)) are Mitochondrial matrix-facing.

The protein belongs to the TMEM223 family. Associates with the mitochondrial ribosome.

Its subcellular location is the mitochondrion inner membrane. Its function is as follows. Mitochondrial ribosome-associated protein involved in the first steps of cytochrome c oxidase complex (complex IV) biogenesis. Stimulates the translation of MT-CO1 mRNA and is a constituent of early MT-CO1 assembly intermediates. This is Transmembrane protein 223 from Mus musculus (Mouse).